The primary structure comprises 151 residues: MHEDLIKVSSNTIKKPTGQVFVVYFSSISNNTHRFIQKLNYENLRIPVNMEESVFVDKDYVIFVPTYSGGGEFTQGAVPKQVIKFLNNEKNRSFCRGVIASGNTNFGNTFAIAGPILSKKLNVPLLYQFELLGTSEDVKNVQNILETFWKT.

Belongs to the NrdI family.

Its function is as follows. Probably involved in ribonucleotide reductase function. This chain is Protein NrdI, found in Mycoplasmopsis pulmonis (strain UAB CTIP) (Mycoplasma pulmonis).